Reading from the N-terminus, the 205-residue chain is Golgi to ER traffic protein 1 (205 aa).

At 1-3 (MDY) the chain is on the lumenal side. Residues 4-24 (WILLVLAFLVADKSWHLTGLL) traverse the membrane as a helical segment. Over 25–96 (ATKLTSPERL…ATKARLAKLK (72 aa)) the chain is Cytoplasmic. Residues 32–96 (ERLQQLIRER…ATKARLAKLK (65 aa)) are a coiled coil. A helical membrane pass occupies residues 97–117 (LLVVTVPFTALKFYKGKLPVY). Topologically, residues 118-156 (ALPKGMFPRFIEGTLEHGWLYMALAPLNMKQFSEGASVA) are lumenal. The helical transmembrane segment at 157 to 173 (VSLGIWLFALLRVLGAI) threads the bilayer. The Cytoplasmic segment spans residues 174 to 205 (EFVLETLREQNPQVATETAKVHARTAQAASAN).

Belongs to the WRB/GET1 family. In terms of assembly, component of the Golgi to ER traffic (GET) complex, which is composed of GET1, GET2 and GET3. Within the complex, GET1 and GET2 form a heterotetramer which is stabilized by phosphatidylinositol binding and which binds to the GET3 homodimer.

The protein resides in the endoplasmic reticulum membrane. The protein localises to the golgi apparatus membrane. Its function is as follows. Required for the post-translational delivery of tail-anchored (TA) proteins to the endoplasmic reticulum. Together with GET2, acts as a membrane receptor for soluble GET3, which recognizes and selectively binds the transmembrane domain of TA proteins in the cytosol. The GET complex cooperates with the HDEL receptor ERD2 to mediate the ATP-dependent retrieval of resident ER proteins that contain a C-terminal H-D-E-L retention signal from the Golgi to the ER. This Eremothecium gossypii (strain ATCC 10895 / CBS 109.51 / FGSC 9923 / NRRL Y-1056) (Yeast) protein is Golgi to ER traffic protein 1.